Consider the following 462-residue polypeptide: MSLRIYNTLSRDVEVFSPLLPGHVRMYVCGMTVYDLCHLGHARAMVAFDVVQRWLKVSGLKVTYVRNVTDIDDKIIKRAVENGETIRSLTDRMVVALHQDADALGIERPTHEPRATDFVPQMLSLIGTLEKKGLAYQTQSGSGQGDVNYAVRKFDGYGKLSGKSLDELRAGERVEVLDGKDDPLDFVLWKSAKPSEPDDAKWDSPYGPGRPGWHIECSAMACELLGESFDIHGGGADLQFPHHENEIAQSEGAFGKPLAGTWMHNGFVRVDNEKMSKSLGNFFTIREILAKYDAETVRFFIIRAHYRSPLNYSDAHLDDARNSLKRLYTALDLVSPAVVAIDWTNPFAARFKAAMDEDFGTPEAVAVLFDLAGEVNKTRSAELAGLLKSLGGCLGLLQSAPGSYLQAGAGLDDASIQRLIAQRADAKKTKNFAEADRIRNDLLGQGIVLKDSPAGTTWEVQS.

Residue cysteine 29 coordinates Zn(2+). The short motif at 31-41 is the 'HIGH' region element; sequence MTVYDLCHLGH. Zn(2+) is bound by residues cysteine 217, histidine 242, and glutamate 246. Residues 274 to 278 carry the 'KMSKS' region motif; sequence KMSKS. Position 277 (lysine 277) interacts with ATP.

The protein belongs to the class-I aminoacyl-tRNA synthetase family. In terms of assembly, monomer. Zn(2+) is required as a cofactor.

It is found in the cytoplasm. The enzyme catalyses tRNA(Cys) + L-cysteine + ATP = L-cysteinyl-tRNA(Cys) + AMP + diphosphate. The sequence is that of Cysteine--tRNA ligase from Polaromonas sp. (strain JS666 / ATCC BAA-500).